A 118-amino-acid polypeptide reads, in one-letter code: Large ribosomal subunit protein uL24 (118 aa).

It belongs to the universal ribosomal protein uL24 family. In terms of assembly, part of the 50S ribosomal subunit.

Functionally, one of two assembly initiator proteins, it binds directly to the 5'-end of the 23S rRNA, where it nucleates assembly of the 50S subunit. One of the proteins that surrounds the polypeptide exit tunnel on the outside of the subunit. The sequence is that of Large ribosomal subunit protein uL24 from Prochlorococcus marinus subsp. pastoris (strain CCMP1986 / NIES-2087 / MED4).